A 254-amino-acid polypeptide reads, in one-letter code: Alcohol dehydrogenase 1 (254 aa).

10–33 (FVAGLGGIGFDTSREIVKKGPKNL) contacts NAD(+). A substrate-binding site is contributed by Ser138. Residue Tyr151 is the Proton acceptor of the active site.

The protein belongs to the short-chain dehydrogenases/reductases (SDR) family. In terms of assembly, homodimer.

The catalysed reaction is a primary alcohol + NAD(+) = an aldehyde + NADH + H(+). It carries out the reaction a secondary alcohol + NAD(+) = a ketone + NADH + H(+). The protein is Alcohol dehydrogenase 1 (Adh1) of Drosophila mojavensis (Fruit fly).